A 557-amino-acid chain; its full sequence is CTP synthase (557 aa).

Residues 1 to 267 (MAKFVFVTGG…CREVLDVLDL (267 aa)) form an amidoligase domain region. S13 contributes to the CTP binding site. S13 contacts UTP. ATP is bound by residues 14–19 (SIGKGI) and D71. Mg(2+) contacts are provided by D71 and E141. CTP is bound by residues 148-150 (DIE), 188-193 (KTKPTQ), and K224. UTP-binding positions include 188–193 (KTKPTQ) and K224. A Glutamine amidotransferase type-1 domain is found at 292–534 (KVALVGKYVQ…IEAAQQRLPC (243 aa)). An L-glutamine-binding site is contributed by G354. Residue C381 is the Nucleophile; for glutamine hydrolysis of the active site. L-glutamine is bound by residues 382–385 (LGMQ), E405, and R462. Residues H507 and E509 contribute to the active site. Residues 532-557 (LPCSPSEAMRQQNNSAAGSSHPSLQP) form a disordered region. Residues 540–557 (MRQQNNSAAGSSHPSLQP) are compositionally biased toward polar residues.

This sequence belongs to the CTP synthase family. As to quaternary structure, homotetramer.

The catalysed reaction is UTP + L-glutamine + ATP + H2O = CTP + L-glutamate + ADP + phosphate + 2 H(+). The enzyme catalyses L-glutamine + H2O = L-glutamate + NH4(+). It carries out the reaction UTP + NH4(+) + ATP = CTP + ADP + phosphate + 2 H(+). Its pathway is pyrimidine metabolism; CTP biosynthesis via de novo pathway; CTP from UDP: step 2/2. Its activity is regulated as follows. Allosterically activated by GTP, when glutamine is the substrate; GTP has no effect on the reaction when ammonia is the substrate. The allosteric effector GTP functions by stabilizing the protein conformation that binds the tetrahedral intermediate(s) formed during glutamine hydrolysis. Inhibited by the product CTP, via allosteric rather than competitive inhibition. Catalyzes the ATP-dependent amination of UTP to CTP with either L-glutamine or ammonia as the source of nitrogen. Regulates intracellular CTP levels through interactions with the four ribonucleotide triphosphates. The polypeptide is CTP synthase (Synechococcus sp. (strain CC9311)).